The primary structure comprises 384 residues: Substance-K receptor (384 aa).

Residues 1 to 32 (MGACVVMTDINISSGLDSNATGITAFSMPGWQ) lie on the Extracellular side of the membrane. N-linked (GlcNAc...) asparagine glycans are attached at residues Asn11 and Asn19. Residues 33-56 (LALWTAAYLALVLVAVMGNATVIW) form a helical membrane-spanning segment. At 57–69 (IILAHQRMRTVTN) the chain is on the cytoplasmic side. The chain crosses the membrane as a helical span at residues 70-90 (YFIVNLALADLCMAAFNAAFN). Topologically, residues 91–107 (FVYASHNIWYFGRAFCY) are extracellular. A disulfide bond links Cys106 and Cys181. The helical transmembrane segment at 108-129 (FQNLFPITAMFVSIYSMTAIAA) threads the bilayer. Over 130-149 (DRYMAIVHPFQPRLSAPGTR) the chain is Cytoplasmic. A helical transmembrane segment spans residues 150–170 (AVIAGIWLVALALAFPQCFYS). The Extracellular segment spans residues 171–196 (TITTDEGATKCVVAWPEDSGGKMLLL). The helical transmembrane segment at 197-218 (YHLIVIALIYFLPLVVMFVAYS) threads the bilayer. Topologically, residues 219–251 (VIGLTLWRRSVPGHQAHGANLRHLQAKKKFVKT) are cytoplasmic. A helical membrane pass occupies residues 252–272 (MVLVVVTFAICWLPYHLYFIL). At 273–290 (GTFQEDIYCHKFIQQVYL) the chain is on the extracellular side. A helical transmembrane segment spans residues 291 to 310 (ALFWLAMSSTMYNPIIYCCL). Residues 311-384 (NHRFRSGFRL…SPQAGVSTEP (74 aa)) are Cytoplasmic-facing. Cys324 carries S-palmitoyl cysteine lipidation.

This sequence belongs to the G-protein coupled receptor 1 family.

It is found in the cell membrane. This is a receptor for the tachykinin neuropeptide substance K (neurokinin A). It is associated with G proteins that activate a phosphatidylinositol-calcium second messenger system. The rank order of affinity of this receptor to tachykinins is: substance K &gt; neuromedin-K &gt; substance P. The protein is Substance-K receptor (TACR2) of Bos taurus (Bovine).